A 562-amino-acid polypeptide reads, in one-letter code: NAD-dependent malic enzyme (562 aa).

Tyr-101 acts as the Proton donor in catalysis. Arg-154 lines the NAD(+) pocket. Lys-172 acts as the Proton acceptor in catalysis. Residues Glu-243, Asp-244, and Asp-267 each contribute to the a divalent metal cation site. Positions 267 and 415 each coordinate NAD(+).

The protein belongs to the malic enzymes family. As to quaternary structure, homotetramer. The cofactor is Mg(2+). Requires Mn(2+) as cofactor.

It carries out the reaction (S)-malate + NAD(+) = pyruvate + CO2 + NADH. It catalyses the reaction oxaloacetate + H(+) = pyruvate + CO2. The polypeptide is NAD-dependent malic enzyme (Aliivibrio fischeri (strain ATCC 700601 / ES114) (Vibrio fischeri)).